We begin with the raw amino-acid sequence, 273 residues long: Light-independent protochlorophyllide reductase iron-sulfur ATP-binding protein (273 aa).

ATP contacts are provided by residues 12–17 (GIGKST) and Lys-41. Residue Ser-16 participates in Mg(2+) binding. Residues Cys-97 and Cys-131 each contribute to the [4Fe-4S] cluster site. Position 182–183 (182–183 (NR)) interacts with ATP.

It belongs to the NifH/BchL/ChlL family. Homodimer. Protochlorophyllide reductase is composed of three subunits; BchL, BchN and BchB. The cofactor is [4Fe-4S] cluster.

The enzyme catalyses chlorophyllide a + oxidized 2[4Fe-4S]-[ferredoxin] + 2 ADP + 2 phosphate = protochlorophyllide a + reduced 2[4Fe-4S]-[ferredoxin] + 2 ATP + 2 H2O. The protein operates within porphyrin-containing compound metabolism; bacteriochlorophyll biosynthesis (light-independent). Its function is as follows. Component of the dark-operative protochlorophyllide reductase (DPOR) that uses Mg-ATP and reduced ferredoxin to reduce ring D of protochlorophyllide (Pchlide) to form chlorophyllide a (Chlide). This reaction is light-independent. The L component serves as a unique electron donor to the NB-component of the complex, and binds Mg-ATP. In Roseiflexus castenholzii (strain DSM 13941 / HLO8), this protein is Light-independent protochlorophyllide reductase iron-sulfur ATP-binding protein.